The sequence spans 530 residues: MASMRESDTGLWLHNKLGATDELWAPPSIASLLTAAVIDNIRLCFHRLSSAVKLKLLLGTLHLPRRTVDEMKAALMDIIQLATLDSDPWVLMVADILKSFPDTGSLNLDLEEQNPNVQDILGELREKVSECEASAMLPLECQYLNKNALTTLAGPLTPPVKHFQLKRKPKSATLRAELLQKSTETAQQLKRSAGVPFHAKGRGLLRKMDTTTPLKGIPKQAPFRSPTTPSVFSPSGNRTPIPPSRTPLQKERGVKLLDISELNTVGAGREAKRRRKTLDTEVVEKPTKEETVVENATPDYAAGLVSTQKLGSLNSEPTLPSTSYLPSTPSVVPASSYIPSSETPPAPPSREASRPPEEPSAPSPTLPTQFKQRAPMYNSGLSPATPAPAAPTSPLTPTTPPAVTPTAQTPPVAMVAPQTQAPAPVQQQPKKNLSLTREQMFAAQEMFKTANKVTRPEKALILGFMAGSRENPCPEQGDVIQIKLSEHTEDLPKADGQGSTTMLVDTVFEMNYATGQWTRFKKYKPMTNVS.

The 160-residue stretch at 89 to 248 (WVLMVADILK…TPIPPSRTPL (160 aa)) folds into the HDAg domain. The interval 125–188 (REKVSECEAS…LQKSTETAQQ (64 aa)) is NELF-C/D-binding. Residue Thr157 is modified to Phosphothreonine. An RNAPII-binding region spans residues 189 to 248 (LKRSAGVPFHAKGRGLLRKMDTTTPLKGIPKQAPFRSPTTPSVFSPSGNRTPIPPSRTPL). Disordered regions lie at residues 213 to 248 (PLKG…RTPL), 266 to 296 (GAGR…VENA), and 312 to 409 (SLNS…TAQT). Phosphoserine is present on residues Ser225 and Ser233. Polar residues predominate over residues 225–238 (SPTTPSVFSPSGNR). At Thr277 the chain carries Phosphothreonine. Over residues 277–291 (TLDTEVVEKPTKEET) the composition is skewed to basic and acidic residues. The segment covering 315 to 341 (SEPTLPSTSYLPSTPSVVPASSYIPSS) has biased composition (low complexity). Ser363 carries the post-translational modification Phosphoserine.

It belongs to the NELF-A family. As to quaternary structure, the NELF complex is composed of NELFA, NELFB, NELFCD and NELFE; NELFA and NELFCD form a stable subcomplex that binds to the N-terminus of NELFB. In vitro, the NELFA:NELFCD subcomplex binds to ssDNA and ssRNA in a sequence- and structure-dependent manner. Interacts with the RNA polymerase II complex when it is not phosphorylated by P-TEFb. Interacts with NELFB. In terms of tissue distribution, ubiquitous. Expressed in brain, heart, spleen, lung, liver, muscle, kidney and testis. Already expressed in 7 dpc embryos.

Its subcellular location is the nucleus. Functionally, essential component of the NELF complex, a complex that negatively regulates the elongation of transcription by RNA polymerase II. The NELF complex, which acts via an association with the DSIF complex and causes transcriptional pausing, is counteracted by the P-TEFb kinase complex. This is Negative elongation factor A (Nelfa) from Mus musculus (Mouse).